A 213-amino-acid chain; its full sequence is Nucleolar protein 12 (213 aa).

The stretch at 33 to 96 (GFHKRKVERK…RLVTAKTESV (64 aa)) forms a coiled coil. Positions 109-213 (TISDLDLSGA…LTGKAQHSRE (105 aa)) are disordered. The span at 130 to 139 (AGDESEEEAS) shows a compositional bias: acidic residues. Over residues 170-182 (AHSRKKVKRKHPR) the composition is skewed to basic residues.

The protein belongs to the RRP17 family. As to quaternary structure, interacts with KIAA1191.

It localises to the nucleus. The protein resides in the nucleolus. Its subcellular location is the cytoplasm. Its function is as follows. Multifunctional RNA binding protein that plays a role in RNA metabolism and DNA maintenance. Participates in the resolution of DNA stress and the maintenance of genome integrity by localizing to sites of DNA insults. Also plays a role in proper nucleolar organization by limiting nucleolar size and regulating nucleolar number. Mechanistically, regulates the nucleolar levels of fibrillarin and nucleolin, two key players in pre-rRNA processing and ribosome assembly. The sequence is that of Nucleolar protein 12 (NOL12) from Pongo abelii (Sumatran orangutan).